A 104-amino-acid chain; its full sequence is Cuticle protein 67, isoform B (104 aa).

Tandem repeats lie at residues Ala7–Ala10, Ala14–Ala17, Ala21–Ala24, Ala28–Ala31, Ala85–Ala88, Ala92–Ala95, and Ala98–Ala101.

In terms of biological role, component of the cuticle of migratory locust which contains more than 100 different structural proteins. The polypeptide is Cuticle protein 67, isoform B (Locusta migratoria (Migratory locust)).